We begin with the raw amino-acid sequence, 217 residues long: DNA helicase assembly protein (217 aa).

The protein belongs to the Tequatrovirus DNA helicase assembly protein family. As to quaternary structure, monomer. Homohexamer; when associated with DNA. Interacts (via C-terminus) with the DnaB-like replicative helicase (via C-terminus); this interaction brings about the rapid assembly of the helicase onto ssDNA. Interacts (via C-terminus) with the single-stranded DNA-binding protein; a ternary complex between the helicase assembly protein, the single-stranded DNA-binding protein and ssDNA is an obligatory intermediate in the helicase loading mechanism. Interacts with the viral DNA polymerase. Binds to single and double-stranded DNA. Part of the replicase complex that includes the DNA polymerase, the polymerase clamp, the clamp loader complex, the single-stranded DNA binding protein (SSB), the primase, the DnaB-like replicative helicase and the helicase assembly factor.

Its function is as follows. DNA helicase loader protein that participates in viral DNA replication, recombination, and repair. At the fork, required for loading of the replicative helicase onto DNA protected by the ssDNA-binding protein. Coordinates simultaneous synthesis of leading- and lagging-strands. The chain is DNA helicase assembly protein from Enterobacteria phage T4 (Bacteriophage T4).